We begin with the raw amino-acid sequence, 1095 residues long: Collagen, type I, alpha 1a (1095 aa).

The span at 1 to 21 (SPAMPVPGPMGPMGPRGPPGS) shows a compositional bias: pro residues. Residues 1-1011 (SPAMPVPGPM…QPQEKAPDPY (1011 aa)) are disordered. The segment covering 22 to 49 (PGASGPQGFTGPPGEPGEAGSAGAMGPR) has biased composition (low complexity). Residues 58–72 (NGEDGESGKPGRGGE) show a composition bias toward basic and acidic residues. Low complexity predominate over residues 127-145 (TGAAGAAGARGNDGAAGAA). Positions 147 to 160 (PPGPTGPAGPPGFP) are enriched in pro residues. Over residues 161–179 (GGPGAKGDAGAQGGRGPEG) the composition is skewed to gly residues. Composition is skewed to low complexity over residues 180-223 (PAGA…AGAP), 232-270 (SGPQ…APGV), and 288-297 (EPGAAGARGA). Residues 299–311 (GERGGPGGRGFPG) are compositionally biased toward gly residues. Low complexity-rich tracts occupy residues 385 to 400 (VGAR…PGPK), 477 to 489 (LPGE…PAGA), 498 to 544 (ERGA…QGMP), and 577 to 592 (RGLT…AGAT). The segment covering 602–611 (GPVGPGGARG) has biased composition (gly residues). Composition is skewed to low complexity over residues 625–661 (AGFA…AGPT) and 675–697 (PKGA…AGRV). A compositionally biased stretch (pro residues) spans 699-712 (PPGPSGNPGPPGPA). The span at 804–822 (PGLAGAPGEPGREGSPGNE) shows a compositional bias: low complexity. Residues 848-858 (APGPPGAPGPV) show a composition bias toward pro residues. The span at 872–893 (PAGPAGSAGPAGPRGPAGALGL) shows a compositional bias: low complexity. Over residues 894-908 (RGDKGESGEAGERGM) the composition is skewed to basic and acidic residues. Positions 924-960 (AGSSGEQGPAGAAGPAGPRGPAGSAGSPGKDGMSGLP) are enriched in low complexity. Residues 976–988 (AGPPGPPGPPGAP) are compositionally biased toward pro residues. Residues 1062–1095 (TGTWGKLPLLDLAPMDVGAPDQEFGLEVGPVCFL) enclose the Fibrillar collagen NC1 domain.

Belongs to the fibrillar collagen family.

It is found in the secreted. The protein resides in the extracellular space. The protein localises to the extracellular matrix. The sequence is that of Collagen, type I, alpha 1a from Epinephelus caninus (Dogtooth grouper).